The primary structure comprises 322 residues: tRNA uridine(34) hydroxylase (322 aa).

Residues 126–220 form the Rhodanese domain; it reads LAEDTVVIDA…YGKDPEVKGE (95 aa). C180 acts as the Cysteine persulfide intermediate in catalysis.

Belongs to the TrhO family.

The enzyme catalyses uridine(34) in tRNA + AH2 + O2 = 5-hydroxyuridine(34) in tRNA + A + H2O. Catalyzes oxygen-dependent 5-hydroxyuridine (ho5U) modification at position 34 in tRNAs. The chain is tRNA uridine(34) hydroxylase from Shouchella clausii (strain KSM-K16) (Alkalihalobacillus clausii).